The following is a 144-amino-acid chain: Small polypeptide DEVIL 15 (144 aa).

A glycan (N-linked (GlcNAc...) asparagine) is linked at N8. The interval 22–63 (SSSSKPFFTRSFSTKTSSSPSSKSHFTRSFSTKPSSSSSSSD) is disordered. A helical membrane pass occupies residues 104 to 120 (ILSKKGASVTGKCFKVA). The required for DVL/RTFL small polypeptide activity stretch occupies residues 111 to 142 (SVTGKCFKVAKEHKSRFYIIKRCVLMLVCWHK).

Belongs to the DVL/RTFL small polypeptides family.

The protein localises to the cell membrane. Its function is as follows. Small polypeptide acting as a regulatory molecule which coordinates cellular responses required for differentiation, growth and development, probably by restricting polar cell proliferation in lateral organs and coordinating socket cell recruitment and differentiation at trichome sites. The protein is Small polypeptide DEVIL 15 of Arabidopsis thaliana (Mouse-ear cress).